The primary structure comprises 349 residues: Putative ABC transporter permease protein MJ0087 (349 aa).

Helical transmembrane passes span 15-35, 69-89, 100-120, 135-155, 166-186, 206-226, 254-274, 295-315, and 318-338; these read IIFGIILLITLFLSSIYALCV, IFAAIISGMSLAVAGAVMQCI, MGISHGAMFGACFAIIMFGFG, MITIFAFLGALIGVVVILLLA, ILAGVAMSSLFTAGTMLIQYF, AIWTEIYIMAAVMIPSLIYFM, LIGMLVASLLTSVNVAFLGII, FLIPISALFGAVLLLIADTFA, and IIAPIVLPVGILTSFLGAPMF.

It belongs to the binding-protein-dependent transport system permease family. FecCD subfamily.

The protein localises to the cell membrane. Its function is as follows. Probably part of a binding-protein-dependent transport system. Probably responsible for the translocation of the substrate across the membrane. The protein is Putative ABC transporter permease protein MJ0087 of Methanocaldococcus jannaschii (strain ATCC 43067 / DSM 2661 / JAL-1 / JCM 10045 / NBRC 100440) (Methanococcus jannaschii).